A 501-amino-acid chain; its full sequence is Monocarboxylate transporter 1 (501 aa).

At 1 to 22 (MPPAVGGPVGYTPPDGGWGWAV) the chain is on the cytoplasmic side. A helical transmembrane segment spans residues 23–44 (VIGAFISIGFSYAFPKSITVFF). (S)-lactate is bound at residue lysine 38. Over 45–55 (KEIEGIFNATT) the chain is Extracellular. The helical transmembrane segment at 56–80 (SEVSWISSIMLAVMYGGGPISSVLV) threads the bilayer. The Cytoplasmic segment spans residues 81–84 (NKYG). A helical membrane pass occupies residues 85 to 105 (SRPVMIVGGILSGSGLIAASF). Topologically, residues 106 to 109 (CNTV) are extracellular. Residues 110–132 (QELYFSVGVIGGLGLAFNLNPAL) form a helical membrane-spanning segment. Topologically, residues 133-146 (TMIGKYFYKRRPLA) are cytoplasmic. Residues 147-169 (NGLAMAGSPVFLSTLAPLNQAFF) traverse the membrane as a helical segment. The Extracellular segment spans residues 170–174 (MIYGW). Residues 175-194 (RGSFLILGGLLLNCCVAGAL) traverse the membrane as a helical segment. At 195-261 (MRPIGPKPTT…FLDLSLFKHR (67 aa)) the chain is on the cytoplasmic side. A disordered region spans residues 201 to 236 (KPTTAEKEKSKGSLQEAGKYETKKGASDANTDLIGG). A phosphoserine mark is found at serine 210, serine 213, and serine 227. The residue at position 231 (threonine 231) is a Phosphothreonine. Residues 262–288 (GFLLYLSGNVLMFFGLFTPLVFLSNYG) traverse the membrane as a helical segment. At 289 to 295 (KSKHYSS) the chain is on the extracellular side. A helical membrane pass occupies residues 296–317 (EKAAFLLSILAFVDMVARPSMG). Aspartate 309 is a binding site for H(+). Residue arginine 313 coordinates (S)-lactate. Residues 318–328 (LVANTKWVRPR) are Cytoplasmic-facing. Residues 329-349 (VQYFFAASIIANGLCHLAAPL) traverse the membrane as a helical segment. Topologically, residues 350 to 353 (SSTY) are extracellular. The chain crosses the membrane as a helical span at residues 354-375 (IELCIYAGFFGFAFGWLSSVLF). The Cytoplasmic segment spans residues 376–389 (ETLMDLVGPQRFSS). A helical membrane pass occupies residues 390-410 (AVGLVTIVECCPVLLGPPVLG). Residues 411–421 (RLNDIYGDYKY) lie on the Extracellular side of the membrane. A helical membrane pass occupies residues 422 to 443 (TYWACGIILIVAGIYLFIGMGI). At 444-501 (NYRLLEKEQKAEKQQKKESKDEETNVDVAEKPKEVIDAAESPEHKATEEDPKEAESPV) the chain is on the cytoplasmic side. A disordered region spans residues 454–501 (AEKQQKKESKDEETNVDVAEKPKEVIDAAESPEHKATEEDPKEAESPV). A Phosphoserine modification is found at serine 462. Threonine 467 bears the Phosphothreonine mark. Residues serine 484 and serine 499 each carry the phosphoserine modification.

It belongs to the major facilitator superfamily. Monocarboxylate porter (TC 2.A.1.13) family. Interacts with BSG; interaction mediates SLC16A1 targeting to the plasma membrane. Interacts with EMB; interaction mediates SLC16A1 targeting to the plasma membrane.

Its subcellular location is the cell membrane. It is found in the basolateral cell membrane. It localises to the apical cell membrane. It catalyses the reaction (S)-lactate(in) + H(+)(in) = (S)-lactate(out) + H(+)(out). The enzyme catalyses acetate(out) + H(+)(out) = acetate(in) + H(+)(in). The catalysed reaction is acetoacetate(out) + H(+)(out) = acetoacetate(in) + H(+)(in). It carries out the reaction pyruvate(out) + H(+)(out) = pyruvate(in) + H(+)(in). It catalyses the reaction (R)-3-hydroxybutanoate(out) + H(+)(out) = (R)-3-hydroxybutanoate(in) + H(+)(in). The enzyme catalyses 3-methyl-2-oxobutanoate(out) + H(+)(out) = 3-methyl-2-oxobutanoate(in) + H(+)(in). The catalysed reaction is 4-methyl-2-oxopentanoate(out) + H(+)(out) = 4-methyl-2-oxopentanoate(in) + H(+)(in). It carries out the reaction succinate(in) + 2 H(+)(in) = succinate(out) + 2 H(+)(out). In terms of biological role, bidirectional proton-coupled monocarboxylate transporter. Catalyzes the rapid transport across the plasma membrane of many monocarboxylates such as lactate, pyruvate, acetate and the ketone bodies acetoacetate and beta-hydroxybutyrate, and thus contributes to the maintenance of intracellular pH. The transport direction is determined by the proton motive force and the concentration gradient of the substrate monocarboxylate. MCT1 is a major lactate exporter. Plays a role in cellular responses to a high-fat diet by modulating the cellular levels of lactate and pyruvate that contribute to the regulation of central metabolic pathways and insulin secretion, with concomitant effects on plasma insulin levels and blood glucose homeostasis. Facilitates the protonated monocarboxylate form of succinate export, that its transient protonation upon muscle cell acidification in exercising muscle and ischemic heart. Functions via alternate outward- and inward-open conformation states. Protonation and deprotonation of 309-Asp is essential for the conformational transition. This is Monocarboxylate transporter 1 (SLC16A1) from Bos taurus (Bovine).